Here is a 597-residue protein sequence, read N- to C-terminus: Probable translation initiation factor IF-2 (597 aa).

Positions 4–221 constitute a tr-type G domain; sequence IRQPIIAVLG…LISGLAQKYL (218 aa). Positions 13–20 are G1; the sequence is GHVDHGKT. 13-20 lines the GTP pocket; the sequence is GHVDHGKT. The G2 stretch occupies residues 38-42; that stretch reads GITQH. The interval 77–80 is G3; that stretch reads DTPG. Residues 77–81 and 131–134 each bind GTP; these read DTPGH and NKID. Positions 131–134 are G4; that stretch reads NKID. The segment at 199 to 201 is G5; it reads SAK.

This sequence belongs to the TRAFAC class translation factor GTPase superfamily. Classic translation factor GTPase family. IF-2 subfamily.

Function in general translation initiation by promoting the binding of the formylmethionine-tRNA to ribosomes. Seems to function along with eIF-2. This is Probable translation initiation factor IF-2 from Thermococcus sibiricus (strain DSM 12597 / MM 739).